The sequence spans 72 residues: Protein kish-A (72 aa).

The first 26 residues, 1–26 (MSAIFNFQSLLTVILLLICTCAYIRS), serve as a signal peptide directing secretion. Over 27 to 53 (LAPSLLDKNKSGLLGIFWKCARIGERK) the chain is Extracellular. A glycan (N-linked (GlcNAc...) asparagine) is linked at N35. Residues 54–71 (SPYVAVCCVVMAFSILFM) traverse the membrane as a helical segment. Q72 is a topological domain (cytoplasmic).

This sequence belongs to the KISH family.

It is found in the golgi apparatus membrane. In terms of biological role, involved in the early part of the secretory pathway. This Taeniopygia guttata (Zebra finch) protein is Protein kish-A (TMEM167A).